The sequence spans 58 residues: Small ribosomal subunit protein bS21 (58 aa).

Belongs to the bacterial ribosomal protein bS21 family.

This is Small ribosomal subunit protein bS21 from Picosynechococcus sp. (strain ATCC 27264 / PCC 7002 / PR-6) (Agmenellum quadruplicatum).